The primary structure comprises 129 residues: Glycine cleavage system H protein (129 aa).

The Lipoyl-binding domain occupies 24–106; sequence SYTVGITEHA…YGEGWFFRVM (83 aa). The residue at position 65 (Lys-65) is an N6-lipoyllysine.

This sequence belongs to the GcvH family. In terms of assembly, the glycine cleavage system is composed of four proteins: P, T, L and H. It depends on (R)-lipoate as a cofactor.

The glycine cleavage system catalyzes the degradation of glycine. The H protein shuttles the methylamine group of glycine from the P protein to the T protein. In Shewanella baltica (strain OS155 / ATCC BAA-1091), this protein is Glycine cleavage system H protein.